A 254-amino-acid polypeptide reads, in one-letter code: Small ribosomal subunit protein uS2 (254 aa).

The protein belongs to the universal ribosomal protein uS2 family.

This is Small ribosomal subunit protein uS2 from Oceanobacillus iheyensis (strain DSM 14371 / CIP 107618 / JCM 11309 / KCTC 3954 / HTE831).